Here is a 358-residue protein sequence, read N- to C-terminus: Alanine racemase (358 aa).

Lys-35 functions as the Proton acceptor; specific for D-alanine in the catalytic mechanism. N6-(pyridoxal phosphate)lysine is present on Lys-35. Arg-131 contacts substrate. The active-site Proton acceptor; specific for L-alanine is the Tyr-253. Met-301 is a substrate binding site.

This sequence belongs to the alanine racemase family. The cofactor is pyridoxal 5'-phosphate.

It carries out the reaction L-alanine = D-alanine. It functions in the pathway amino-acid biosynthesis; D-alanine biosynthesis; D-alanine from L-alanine: step 1/1. Its function is as follows. Catalyzes the interconversion of L-alanine and D-alanine. May also act on other amino acids. In Alteromonas mediterranea (strain DSM 17117 / CIP 110805 / LMG 28347 / Deep ecotype), this protein is Alanine racemase (alr).